Reading from the N-terminus, the 939-residue chain is Serine/threonine-protein kinase STE20 (939 aa).

A disordered region spans residues 1–87 (MSNDPSAVSE…TNDDDNNVVS (87 aa)). N-acetylserine is present on Ser2. The segment covering 44 to 57 (TTGTLNVNALQKGT) has biased composition (polar residues). Phosphoserine is present on residues Ser87 and Ser165. Thr167 carries the post-translational modification Phosphothreonine. Ser169 carries the phosphoserine modification. The segment covering 176–196 (NATVKHQQPVASSTVNSNKSS) has biased composition (polar residues). Disordered regions lie at residues 176-299 (NATV…LRMK) and 311-331 (RNSQ…SSSI). Thr203 bears the Phosphothreonine mark. Residues 204 to 231 (PVSTPVISKPSMTTTPRQINSASHSLSN) are compositionally biased toward polar residues. Positions 232 to 243 (PKHKQHKPKVKP) are enriched in basic residues. Low complexity-rich tracts occupy residues 251 to 283 (KPVS…YSSS) and 320 to 330 (SSSSNNSSSSS). Positions 337–350 (ISTPYNAKHIHHVG) constitute a CRIB domain. Disordered stretches follow at residues 407–487 (KTFN…SASA) and 500–598 (NVSP…ERER). Polar residues-rich tracts occupy residues 408-467 (TFNT…SSAN) and 500-527 (NVSP…SRNA). The residue at position 418 (Ser418) is a Phosphoserine. The interval 434 to 499 (PSTSDSHNYG…IKSPVMNSAA (66 aa)) is BEM1-binding. Residues Ser502, Ser547, and Ser562 each carry the phosphoserine modification. Positions 542-552 (TKSKTSPIIST) are enriched in low complexity. The segment covering 569–578 (ETVTTPTSKP) has biased composition (polar residues). Thr573 bears the Phosphothreonine mark. The segment covering 584-597 (LSKELNEKKREERE) has biased composition (basic and acidic residues). Ser585 bears the Phosphoserine mark. Positions 620–871 (YANLVKIGQG…ATELLHDEYI (252 aa)) constitute a Protein kinase domain. ATP contacts are provided by residues 626 to 634 (IGQGASGGV) and Lys649. Asp739 functions as the Proton acceptor in the catalytic mechanism. Position 773 is a phosphothreonine (Thr773). A compositionally biased stretch (acidic residues) spans 899–908 (ADEDNDDDND). The segment at 899 to 939 (ADEDNDDDNDNEHINKTNNCDDNNDSKETVNLDVTEDDKQK) is disordered. Position 924 is a phosphoserine (Ser924). Thr927 carries the phosphothreonine modification.

This sequence belongs to the protein kinase superfamily. STE Ser/Thr protein kinase family. STE20 subfamily. As to quaternary structure, interacts with BEM1, CDC42, CLN2, STE4 and the 14-3-3 proteins BMH1 and BMH2. In terms of processing, autophosphorylated and phosphorylated by the CLN2-CDC28 complex in a cell cycle dependent manner. Autophosphorylated on serine residues.

The protein localises to the cytoplasm. It localises to the nucleus. The catalysed reaction is L-seryl-[protein] + ATP = O-phospho-L-seryl-[protein] + ADP + H(+). It catalyses the reaction L-threonyl-[protein] + ATP = O-phospho-L-threonyl-[protein] + ADP + H(+). Its function is as follows. MAP4K component of the MAPK pathway required for the mating pheromone response, haploid invasive growth and diploid pseudohyphal development. Links the pheromone response G-protein beta gamma subunits to downstream signaling components. Needed for mating in haploid cells, induction of a mating-specific gene FUS1, induction of mating-specific morphologies, and pheromone-induced proliferation arrest. Required for the regulation of the actin polarization and bud emergence during cell cycle in G1. Involved in the high osmolarity glycerol (HOG) response. Phosphorylates 'Thr-307' and 'Ser-302' or 'Ser-306' of STE11 and 'Ser-357' of MYO3. Phosphorylates histone H2B to form H2BS10ph during meiosis and H(2)O(2)-induced apoptosis. Its interaction with CDC42 is required for both invasive growth and the formation of pseudohyphae. Its interaction with STE4 is required for the pheromone signaling. The sequence is that of Serine/threonine-protein kinase STE20 (STE20) from Saccharomyces cerevisiae (strain ATCC 204508 / S288c) (Baker's yeast).